Consider the following 211-residue polypeptide: Thymidylate kinase (211 aa).

Residue 10-17 (GLDGSGKT) coordinates ATP.

It belongs to the thymidylate kinase family.

The catalysed reaction is dTMP + ATP = dTDP + ADP. Phosphorylation of dTMP to form dTDP in both de novo and salvage pathways of dTTP synthesis. The polypeptide is Thymidylate kinase (Blochmanniella floridana).